The primary structure comprises 103 residues: Gibberellin-regulated protein 13 (103 aa).

An N-terminal signal peptide occupies residues 1-20 (MATKLSIIVFSIVVLHLLLS).

It belongs to the GASA family. Six disulfide bonds may be present.

It is found in the secreted. Gibberellin-regulated protein that may function in hormonal controlled steps of development such as seed germination, flowering and seed maturation. This is Gibberellin-regulated protein 13 (GASA13) from Arabidopsis thaliana (Mouse-ear cress).